The sequence spans 272 residues: Dermonecrotic toxin LvSicTox-alphaIC1bv (272 aa).

His-5 is a catalytic residue. Positions 25 and 27 each coordinate Mg(2+). The active-site Nucleophile is the His-41. Intrachain disulfides connect Cys-45/Cys-51 and Cys-47/Cys-189. Residue Asp-84 coordinates Mg(2+).

The protein belongs to the arthropod phospholipase D family. Class II subfamily. Mg(2+) is required as a cofactor. In terms of tissue distribution, expressed by the venom gland.

Its subcellular location is the secreted. It catalyses the reaction an N-(acyl)-sphingosylphosphocholine = an N-(acyl)-sphingosyl-1,3-cyclic phosphate + choline. The enzyme catalyses an N-(acyl)-sphingosylphosphoethanolamine = an N-(acyl)-sphingosyl-1,3-cyclic phosphate + ethanolamine. The catalysed reaction is a 1-acyl-sn-glycero-3-phosphocholine = a 1-acyl-sn-glycero-2,3-cyclic phosphate + choline. It carries out the reaction a 1-acyl-sn-glycero-3-phosphoethanolamine = a 1-acyl-sn-glycero-2,3-cyclic phosphate + ethanolamine. Its function is as follows. Dermonecrotic toxins cleave the phosphodiester linkage between the phosphate and headgroup of certain phospholipids (sphingolipid and lysolipid substrates), forming an alcohol (often choline) and a cyclic phosphate. This toxin acts on sphingomyelin (SM). It may also act on ceramide phosphoethanolamine (CPE), lysophosphatidylcholine (LPC) and lysophosphatidylethanolamine (LPE), but not on lysophosphatidylserine (LPS), and lysophosphatidylglycerol (LPG). It acts by transphosphatidylation, releasing exclusively cyclic phosphate products as second products. Induces dermonecrosis, hemolysis, increased vascular permeability, edema, inflammatory response, and platelet aggregation. The chain is Dermonecrotic toxin LvSicTox-alphaIC1bv from Loxosceles variegata (Recluse spider).